Consider the following 259-residue polypeptide: Protoheme IX farnesyltransferase (259 aa).

A run of 8 helical transmembrane segments spans residues 15–35 (LICL…NGVL), 61–81 (ATVA…TFLP), 83–103 (LTTA…TLWF), 109–129 (WGVV…ASAV), 137–157 (PLIL…ALAL), 182–202 (VCIF…WFTG), 208–228 (FAIE…LYLV), and 236–256 (AFQA…IDIC).

The protein belongs to the UbiA prenyltransferase family. Protoheme IX farnesyltransferase subfamily.

Its subcellular location is the cell inner membrane. It catalyses the reaction heme b + (2E,6E)-farnesyl diphosphate + H2O = Fe(II)-heme o + diphosphate. The protein operates within porphyrin-containing compound metabolism; heme O biosynthesis; heme O from protoheme: step 1/1. In terms of biological role, converts heme B (protoheme IX) to heme O by substitution of the vinyl group on carbon 2 of heme B porphyrin ring with a hydroxyethyl farnesyl side group. In Geotalea uraniireducens (strain Rf4) (Geobacter uraniireducens), this protein is Protoheme IX farnesyltransferase.